A 2038-amino-acid polypeptide reads, in one-letter code: Non-reducing polyketide synthase ZEA1 (2038 aa).

The interval 9–246 (LLFGDQTDSW…NELNIHALQH (238 aa)) is N-terminal acylcarrier protein transacylase domain (SAT). Residues 364–794 (PGRIAIVGMA…GGNACILLED (431 aa)) form the Ketosynthase family 3 (KS3) domain. Residues cysteine 537, histidine 672, and histidine 711 each act as for beta-ketoacyl synthase activity in the active site. The interval 888 to 1172 (VFVFTGQGSH…VCSSFVRATL (285 aa)) is malonyl-CoA:ACP transacylase (MAT) domain. Serine 979 serves as the catalytic For acyl/malonyl transferase activity. The tract at residues 1221–1572 (SLLNLPTYAW…HFHEVENAVL (352 aa)) is product template (PT) domain. The N-terminal hotdog fold stretch occupies residues 1254-1405 (HETFKANIST…GQLIQARWDK (152 aa)). Positions 1254 to 1573 (HETFKANIST…FHEVENAVLD (320 aa)) constitute a PKS/mFAS DH domain. The C-terminal hotdog fold stretch occupies residues 1425–1573 (ISHRLQPQIL…FHEVENAVLD (149 aa)). In terms of domain architecture, Carrier spans 1616-1693 (QSDAHVLDSI…DLRRVFAPKS (78 aa)). Serine 1653 carries the O-(pantetheine 4'-phosphoryl)serine modification. A disordered region spans residues 1700–1738 (NDLSRPSLVDDTSQALQSSGSESFDQPPTSVTSTSDSGS). Polar residues predominate over residues 1709–1737 (DDTSQALQSSGSESFDQPPTSVTSTSDSG). The tract at residues 1778–1882 (TGTIATYIHL…PRSKTVEDKN (105 aa)) is thioesterase (TE) domain. The active-site For thioesterase activity is histidine 2021.

It functions in the pathway mycotoxin biosynthesis. Functionally, non-reducing polyketide synthase; part of the gene cluster that mediates the biosynthesis of zearalenone (ZEA), a nonsteroid estrogen that is a contaminant of cereal grains and causes estrogenic disorders in humans and animals. The ZEA backbone is synthesized from a single acetyl-CoA molecule and eight malonyl-CoA molecules. The reducing polyketide synthase ZEA2 is proposed to synthesize a reduced hexaketide intermediate by using different combinations of its reductive domains during each round of condensation. The hexaketide thioester is then transacylated to the non-reducing polyketide synthase ZEA1 and is further condensed with three malonyl-CoAs without reductive tailoring to yield a mixed reduced/unreduced nonaketide. ZEA1 must be able to interact with ZEA2 to facilitate starter-unit acyltransfer and initiate polyketide biosynthesis. ZEA1 also mediates the required C2-C7 cyclization to form the resorcylate core and catalyzes the formation of the macrolactone. ZEA1 exhibits broad starter-unit specificities toward fatty acyl-CoAs ranging in sizes between C6 and C16 and displays the highest activity toward decanoyl-CoA. ZEB1 is then responsible for the chemical conversion of beta-zearalenonol (beta-ZOL) to ZEA in the biosynthetic pathway. The polypeptide is Non-reducing polyketide synthase ZEA1 (Gibberella zeae (strain ATCC MYA-4620 / CBS 123657 / FGSC 9075 / NRRL 31084 / PH-1) (Wheat head blight fungus)).